A 200-amino-acid chain; its full sequence is NADH-quinone oxidoreductase subunit I 1 (200 aa).

2 4Fe-4S ferredoxin-type domains span residues 52–82 and 98–127; these read LNRH…VEGA and RVYQ…MTNE. [4Fe-4S] cluster contacts are provided by cysteine 62, cysteine 65, cysteine 68, cysteine 72, cysteine 107, cysteine 110, cysteine 113, and cysteine 117. The tract at residues 181–200 is disordered; sequence TERQVAVSKGEKPQDEGVEA. A compositionally biased stretch (basic and acidic residues) spans 189-200; the sequence is KGEKPQDEGVEA.

This sequence belongs to the complex I 23 kDa subunit family. As to quaternary structure, NDH-1 is composed of 14 different subunits. Subunits NuoA, H, J, K, L, M, N constitute the membrane sector of the complex. The cofactor is [4Fe-4S] cluster.

The protein localises to the cell membrane. The enzyme catalyses a quinone + NADH + 5 H(+)(in) = a quinol + NAD(+) + 4 H(+)(out). NDH-1 shuttles electrons from NADH, via FMN and iron-sulfur (Fe-S) centers, to quinones in the respiratory chain. The immediate electron acceptor for the enzyme in this species is believed to be ubiquinone. Couples the redox reaction to proton translocation (for every two electrons transferred, four hydrogen ions are translocated across the cytoplasmic membrane), and thus conserves the redox energy in a proton gradient. The protein is NADH-quinone oxidoreductase subunit I 1 of Streptomyces avermitilis (strain ATCC 31267 / DSM 46492 / JCM 5070 / NBRC 14893 / NCIMB 12804 / NRRL 8165 / MA-4680).